Consider the following 362-residue polypeptide: Peptide chain release factor 1 (362 aa).

Gln-240 bears the N5-methylglutamine mark.

It belongs to the prokaryotic/mitochondrial release factor family. In terms of processing, methylated by PrmC. Methylation increases the termination efficiency of RF1.

The protein localises to the cytoplasm. Peptide chain release factor 1 directs the termination of translation in response to the peptide chain termination codons UAG and UAA. This Bifidobacterium longum (strain DJO10A) protein is Peptide chain release factor 1.